We begin with the raw amino-acid sequence, 283 residues long: Diaminopimelate epimerase (283 aa).

Substrate is bound by residues asparagine 13, glutamine 45, and asparagine 65. The active-site Proton donor is the cysteine 74. Substrate is bound by residues 75-76 (GN), asparagine 156, asparagine 190, and 208-209 (ER). Cysteine 217 functions as the Proton acceptor in the catalytic mechanism. 218-219 (GS) is a binding site for substrate.

Belongs to the diaminopimelate epimerase family. In terms of assembly, homodimer.

Its subcellular location is the cytoplasm. It catalyses the reaction (2S,6S)-2,6-diaminopimelate = meso-2,6-diaminopimelate. It functions in the pathway amino-acid biosynthesis; L-lysine biosynthesis via DAP pathway; DL-2,6-diaminopimelate from LL-2,6-diaminopimelate: step 1/1. Its function is as follows. Catalyzes the stereoinversion of LL-2,6-diaminopimelate (L,L-DAP) to meso-diaminopimelate (meso-DAP), a precursor of L-lysine and an essential component of the bacterial peptidoglycan. The chain is Diaminopimelate epimerase from Bartonella tribocorum (strain CIP 105476 / IBS 506).